The sequence spans 645 residues: 1,4-alpha-glucan branching enzyme GlgB (645 aa).

Catalysis depends on D309, which acts as the Nucleophile. Residue E352 is the Proton donor of the active site. The disordered stretch occupies residues 619 to 645 (VKTRKGSKKQDGSKTKVRSNVTSRGKR). The segment covering 636-645 (RSNVTSRGKR) has biased composition (polar residues).

It belongs to the glycosyl hydrolase 13 family. GlgB subfamily. As to quaternary structure, monomer.

It catalyses the reaction Transfers a segment of a (1-&gt;4)-alpha-D-glucan chain to a primary hydroxy group in a similar glucan chain.. It participates in glycan biosynthesis; glycogen biosynthesis. Catalyzes the formation of the alpha-1,6-glucosidic linkages in glycogen by scission of a 1,4-alpha-linked oligosaccharide from growing alpha-1,4-glucan chains and the subsequent attachment of the oligosaccharide to the alpha-1,6 position. This is 1,4-alpha-glucan branching enzyme GlgB from Bacillus cereus (strain Q1).